A 205-amino-acid chain; its full sequence is MLKVGLTGGIGAGKSEVSRLLVEHGAVLIDADRIAREVVAPGTPGLAAVVEAFGTDVLAPDGSLDRPKLGSIVFADPDKLAVLNAIVHPLVGARSRELETAAAADAVVIHDVPLLAENGLAPLYDLVVVVDASPETQLDRLVRLRGMTEQDARARMAAQATREKRLAIADIVMDNDVPLEELERRVGDVWADLVHRAHQPGESQE.

Residues 3–204 (KVGLTGGIGA…HRAHQPGESQ (202 aa)) enclose the DPCK domain. 11–16 (GAGKSE) provides a ligand contact to ATP.

Belongs to the CoaE family.

It localises to the cytoplasm. The catalysed reaction is 3'-dephospho-CoA + ATP = ADP + CoA + H(+). The protein operates within cofactor biosynthesis; coenzyme A biosynthesis; CoA from (R)-pantothenate: step 5/5. Its function is as follows. Catalyzes the phosphorylation of the 3'-hydroxyl group of dephosphocoenzyme A to form coenzyme A. The chain is Dephospho-CoA kinase from Streptomyces avermitilis (strain ATCC 31267 / DSM 46492 / JCM 5070 / NBRC 14893 / NCIMB 12804 / NRRL 8165 / MA-4680).